Here is a 658-residue protein sequence, read N- to C-terminus: Protein teflon (658 aa).

Residues 33-56 form a C2H2-type 1 zinc finger; it reads LYCHFCRDLFTQLPEFLRHLQSNH. The segment at 80 to 131 is disordered; the sequence is DKAHEDAQSAGHNSSSGDSRSLMNSEDSRAIDGSEENSDNSPVKPEQIGKQN. Over residues 89-104 the composition is skewed to polar residues; that stretch reads AGHNSSSGDSRSLMNS. 2 consecutive C2H2-type zinc fingers follow at residues 608 to 630 and 634 to 657; these read YFCK…LISH and FQCT…RNAH.

It belongs to the Teflon family.

Its subcellular location is the nucleus. The protein localises to the chromosome. Its function is as follows. Specifically required in males for proper segregation of autosomal bivalents at meiosis I. Expression is required in the male germ line prior to spermatocyte stage S4. May have a role as a bridging molecule maintaining adhesion to hold autosome bivalents together via heterochromatic connections. The polypeptide is Protein teflon (Drosophila simulans (Fruit fly)).